The following is a 106-amino-acid chain: Late cornified envelope protein 2A (106 aa).

Positions 1–10 (MSCQQNQQQC) are enriched in low complexity. The disordered stretch occupies residues 1-25 (MSCQQNQQQCQPPPKCPPKCPPKCP). A compositionally biased stretch (pro residues) spans 11-25 (QPPPKCPPKCPPKCP).

Belongs to the LCE family. In terms of assembly, interacts with CYSRT1. Skin-specific. Expression was readily detected in adult trunk skin, adult arm skin, fetal skin, penal skin, vulva, esophagus and tongue. Not expressed in the cervix, rectum, lung, colon, or placenta.

In terms of biological role, precursors of the cornified envelope of the stratum corneum. This chain is Late cornified envelope protein 2A (LCE2A), found in Homo sapiens (Human).